We begin with the raw amino-acid sequence, 546 residues long: Chromosomal replication initiator protein DnaA (546 aa).

Residues 1-85 form a domain I, interacts with DnaA modulators region; the sequence is MSDPQAALRA…TRALSQHMGR (85 aa). The interval 85-204 is domain II; that stretch reads RPCSLAVTIA…EPAHNPNREK (120 aa). Positions 96 to 111 are enriched in pro residues; sequence PPQPAPQEEPPAPAPQ. The disordered stretch occupies residues 96-209; sequence PPQPAPQEEP…PNREKSLNPK (114 aa). Residues 126 to 145 are compositionally biased toward low complexity; it reads QTQAFQQPTQSTQPAPASQP. Over residues 191 to 209 the composition is skewed to basic and acidic residues; the sequence is IPREEPAHNPNREKSLNPK. Positions 205–421 are domain III, AAA+ region; that stretch reads SLNPKHTFEN…GALIRVSAYS (217 aa). 4 residues coordinate ATP: Gly-249, Gly-251, Lys-252, and Thr-253. Positions 422-546 are domain IV, binds dsDNA; the sequence is SLVNEPISLE…TQRVKNHNQR (125 aa).

This sequence belongs to the DnaA family. Oligomerizes as a right-handed, spiral filament on DNA at oriC.

It is found in the cytoplasm. Its function is as follows. Plays an essential role in the initiation and regulation of chromosomal replication. ATP-DnaA binds to the origin of replication (oriC) to initiate formation of the DNA replication initiation complex once per cell cycle. Binds the DnaA box (a 9 base pair repeat at the origin) and separates the double-stranded (ds)DNA. Forms a right-handed helical filament on oriC DNA; dsDNA binds to the exterior of the filament while single-stranded (ss)DNA is stabiized in the filament's interior. The ATP-DnaA-oriC complex binds and stabilizes one strand of the AT-rich DNA unwinding element (DUE), permitting loading of DNA polymerase. After initiation quickly degrades to an ADP-DnaA complex that is not apt for DNA replication. Binds acidic phospholipids. This chain is Chromosomal replication initiator protein DnaA, found in Corynebacterium aurimucosum (strain ATCC 700975 / DSM 44827 / CIP 107346 / CN-1) (Corynebacterium nigricans).